The following is a 2357-amino-acid chain: MQPPPQAVPSGVAGPPPAGNPRSMFWANSPYRKPANNAPVAPITRPLQPVTDPFAFNRQTLQNTPVGSSSKSSLPNLPGPALSVFSQWPGLPVTPTNAGDSSTGLHEPLSGTLSQPRADASLFPPASTPSSLPGLEVSRNAEADPSSGHEVQMLPHSAHYIPGVGPEQPLGGQMNDSGSGPDQPMNRHAPHDGAVTHAASPFLPQPQMPGQWGPAQGGPQPSYQHHSPYLEGPVQNMGLQAASLPHFPPPSSLHQGPGHESHAPQTFTPASLASGEGNEIVHQQSKNHPLSSFPPKHTFEQNSRIGNMWASPELKQNPGVNKEHLLDPAHVNPFTQGNSPENQAHHPPVAATNHALQEAASGALSMFFQGEETENEENLSSEKAGLDKRLNLDSFSSTSRLGHPPPPGASGVYQAFPRGPSSEAAQEGDAQPYFSQSVGVRLDKQSTVPPANDAWGDVPGTGTRCASGPQCENVENLEFVQNQEVLPRETLSVDPFPLSDQIRYGPLPGPAASRPATVGLTRGGGLNLEAPDTPLHPTRPDSVSSSYSSHSHRSPPGSARPQELVGTFIQQEVGKLEDDTSGSFFKQIDSSPVGGETDEVTGSQNCCSSLSQPSTPSPPKPTGVFQTSANSSFEPVKSHLVGVKPVEADRANMVVEVRGTQYCPKKRRAAVAPPDATSGNLEQPPDNMETPCAPQACPLPLSTTGEAGQLVSNTAGTPLDTVRPVPDKRPSARAQGPVKCESPATTLWAQNELPDFGGNVLLAPAAPALYVPVKPKPSEVVHHPEKGMSGQKAWKQGSVPPLQNQDPPGASENLENPPKVGEEEALPVQASSGYASLLSSPPTESLHNQPVLIAQPDQSYNLAQPINFSVSLLNPNEKNQSWGDAVVGERSIVSNNWALGGDPEERAALSGVPASAVTGASLPSSIPQNCAPQGSGSSEMIASQSASWLVQQLSPQTPQSPHPNAEKGPSEFVSSPAGNTSVMLVPPASSTLVPNSNKAKHSSNQEEAVGALDFTLNRTLENPVRMYSPSPSDGPASQQPLPNHPRQSGPGLHNQDHFYQQVTKDAQDQHRLERAQPELVPPRPQNSPQVPQASCPEPSNPESPPTQGQSESLAQPPASPASVNTGQLLPQPPQASSASVTSTNSSQAAVRSEQLWLHPPPPNTFGPAPQDLASYYYYRPLYDAYQSQYPSPYPSDPGTASLYYQDMYGLYEPRYRPYDSSASAYAENHRYSEPERPSSRASHYSDQLAPRQGYPEGYYNSKSGWSSHSDYYANYYSGQYDYGDPSRWDRYYGSRLRDPRTWDRRYWYDSEHDPYRKDHYAYSDRPEKCDDHWRYDPRFTGSFDDDAEIHRDPYGEEADRRSIHSEHSARSLRSTHSLPSRRSSLSSHSHQSQIYRSHHVTGGSFEAPHAPGSFHGDYAYGTYASNFSGAHGFPEYSYPADTSWPAVEQVPSRPTSPEKFTVPHVCARFGPGGQLLKVIPNLPSEGQPALVEIHSLETLLQHTPEQEEMRSFPGPLGKDDTHKVDVINFAQNKATKCLQNESLIDKESASLLWKFIILLCRQNGTVVGTDIAELLLRDHRTVWLPGKSPNEANLIDFTNEAVEQVEEEESGEAQLSFLTDSQTVTTSVLEKETERFRELLLYGRKKDALESAMKNGLWGHALLLASKMDSRTHARVMTRFANSLPINDPLQTVYQLMSGRMPAASTCCGDEKWGDWRPHLAMVLSNLNNNMDVESRTMATMGDTLASKGLLDAAHFCYLMAQVGFGVYTKKTTKLVLIGSNHSLPFLKFATNEAIQRTEAYEYAQSLGAHTCSLPNFQVFKFIYLCRLAEMGLATQAFHYCEVIAKSVLTQPGAYSPVLISQLTQMASQLRLFDPQLKEKPEEESFVEPAWLVQLQHVERQIQEGTVLWSQDGTEPQQCRITSGSEVEQSDGPGLNQQAGPQADNPLLMPSTEPLMHGVQLLPTAPQTLPDGQPAHLSRVPMFPVPMSRGPLELSPAYGPPGSALGFPESSRSDPAVLHPGQALPPTTLSLQESGLPPQEAKSPDPEMVPRGSPVRHSPPELSQEEFGESFADPGSSRTAQDLETSPVWDLGSSSLTRAPSLTSDSEGKKPAQAVKKEPKEPKKTESWFSRWLPGKKRTEAYLPDDKNKSIVWDEKKNQWVNLNEPEEEKKAPPPPPTSFPRVPQVAPTGPAGPPTASVNVFSRKAGGSRARYVDVLNPSGTQRSEPALAPADFFAPLAPLPIPSNLFVPNPDAEEPQPADGTGCRGQAPAGTQSKAESTLEPKVGSSTVSAPGPELLPSKPDGSQGGEAPGDHCPTGAPHGGSVPFYNPAQLVQASVTSGNSRPGRIGQRKYAALN.

Disordered regions lie at residues 1–225, 240–347, 394–463, 504–562, 579–630, 666–689, 714–739, 778–820, 917–1008, 1023–1055, and 1076–1151; these read MQPP…SYQH, QAAS…AHHP, SFSS…GTGT, YGPL…ARPQ, DTSG…TSAN, KRRA…DNME, TAGT…GPVK, SEVV…PPKV, VTGA…QEEA, PVRM…LHNQ, and QPEL…AAVR. Composition is skewed to polar residues over residues 57 to 75 and 94 to 104; these read NRQT…SSLP and TPTNAGDSSTG. Over residues 208-221 the composition is skewed to low complexity; that stretch reads MPGQWGPAQGGPQP. Residues 281–290 are compositionally biased toward polar residues; sequence VHQQSKNHPL. Ser311 bears the Phosphoserine mark. Residues 333-342 show a composition bias toward polar residues; it reads PFTQGNSPEN. Positions 540–561 are enriched in low complexity; the sequence is PDSVSSSYSSHSHRSPPGSARP. Ser581, Ser591, Ser609, Ser611, and Ser614 each carry phosphoserine. Residues 581 to 590 are compositionally biased toward polar residues; that stretch reads SGSFFKQIDS. Residue Thr615 is modified to Phosphothreonine. Residue Ser617 is modified to Phosphoserine. Polar residues-rich tracts occupy residues 921–959, 972–997, and 1029–1041; these read SLPS…QTPQ, FVSS…PNSN, and PSPS…QQPL. The interval 1037–1905 is required for localization to endoplasmic reticulum exit sites; that stretch reads SQQPLPNHPR…QHVERQIQEG (869 aa). At Ser1087 the chain carries Phosphoserine. The interval 1118–1415 is interaction with MIA3; sequence ASPASVNTGQ…EAPHAPGSFH (298 aa). The required for endoplasmic reticulum localization stretch occupies residues 1119 to 1420; sequence SPASVNTGQL…PGSFHGDYAY (302 aa). Residues 1134–1150 are compositionally biased toward low complexity; that stretch reads QASSASVTSTNSSQAAV. Ser1223 is subject to Phosphoserine. The segment at 1226–1253 is disordered; sequence AENHRYSEPERPSSRASHYSDQLAPRQG. Positions 1227–1238 are enriched in basic and acidic residues; that stretch reads ENHRYSEPERPS. Position 1245 is a phosphoserine (Ser1245). Thr1340 bears the Phosphothreonine mark. Phosphoserine occurs at positions 1342, 1362, 1365, 1371, 1374, 1377, 1384, 1588, and 1616. The segment at 1344 to 1395 is disordered; sequence DDDAEIHRDPYGEEADRRSIHSEHSARSLRSTHSLPSRRSSLSSHSHQSQIY. The span at 1348–1369 shows a compositional bias: basic and acidic residues; it reads EIHRDPYGEEADRRSIHSEHSA. The segment covering 1371–1392 has biased composition (low complexity); the sequence is SLRSTHSLPSRRSSLSSHSHQS. The central conserved domain (CCD); mediates interaction with RNF183, LRRK2 and SEC13 stretch occupies residues 1449-1905; that stretch reads QVPSRPTSPE…QHVERQIQEG (457 aa). The disordered stretch occupies residues 1907–1943; that stretch reads VLWSQDGTEPQQCRITSGSEVEQSDGPGLNQQAGPQA. The segment covering 1908–1927 has biased composition (polar residues); it reads LWSQDGTEPQQCRITSGSEV. A Phosphothreonine modification is found at Thr1922. 5 positions are modified to phosphoserine: Ser1951, Ser2043, Ser2063, Ser2077, and Ser2094. Disordered regions lie at residues 1993–2141, 2156–2198, and 2240–2357; these read ELSP…RTEA, KKNQ…PTAS, and PLPI…AALN. A compositionally biased stretch (polar residues) spans 2092-2105; sequence GSSSLTRAPSLTSD. Residues 2106 to 2126 show a composition bias toward basic and acidic residues; sequence SEGKKPAQAVKKEPKEPKKTE. Residues 2126-2357 form a required for interaction with SEC23A region; sequence ESWFSRWLPG…IGQRKYAALN (232 aa). A Phosphoserine modification is found at Ser2291. The span at 2332–2343 shows a compositional bias: polar residues; it reads QLVQASVTSGNS.

The protein belongs to the SEC16 family. In terms of assembly, SEC16A and SEC16B are each present in multiple copies in a heteromeric complex. Interacts with SEC23A. Interacts with RNF183, RNF152, MIA3 and SEC13. Interacts with GORASP2 in response to ER stress. Interacts with LRRK2 (via ROC domain). Interacts with RAB10.

It localises to the endoplasmic reticulum membrane. It is found in the golgi apparatus membrane. The protein localises to the cytoplasm. The protein resides in the perinuclear region. Its subcellular location is the cytosol. It localises to the microsome membrane. In terms of biological role, acts as a molecular scaffold that plays a key role in the organization of the endoplasmic reticulum exit sites (ERES), also known as transitional endoplasmic reticulum (tER). SAR1A-GTP-dependent assembly of SEC16A on the ER membrane forms an organized scaffold defining an ERES. Required for secretory cargo traffic from the endoplasmic reticulum to the Golgi apparatus. Mediates the recruitment of MIA3/TANGO to ERES. Regulates both conventional (ER/Golgi-dependent) and GORASP2-mediated unconventional (ER/Golgi-independent) trafficking of CFTR to cell membrane. Acts as a RAB10 effector in the regulation of insulin-induced SLC2A4/GLUT4 glucose transporter-enriched vesicles delivery to the plasma membrane in adipocytes. The sequence is that of Protein transport protein Sec16A (Sec16a) from Mus musculus (Mouse).